Here is a 217-residue protein sequence, read N- to C-terminus: 3,4-dihydroxy-2-butanone 4-phosphate synthase (217 aa).

D-ribulose 5-phosphate-binding positions include 37 to 38 (RE), Asp42, 150 to 154 (RGGHT), and Glu174. Glu38 contacts Mg(2+). His153 provides a ligand contact to Mg(2+).

The protein belongs to the DHBP synthase family. Homodimer. Requires Mg(2+) as cofactor. The cofactor is Mn(2+).

The catalysed reaction is D-ribulose 5-phosphate = (2S)-2-hydroxy-3-oxobutyl phosphate + formate + H(+). The protein operates within cofactor biosynthesis; riboflavin biosynthesis; 2-hydroxy-3-oxobutyl phosphate from D-ribulose 5-phosphate: step 1/1. Its function is as follows. Catalyzes the conversion of D-ribulose 5-phosphate to formate and 3,4-dihydroxy-2-butanone 4-phosphate. In Sodalis glossinidius (strain morsitans), this protein is 3,4-dihydroxy-2-butanone 4-phosphate synthase.